The primary structure comprises 574 residues: Septation ring formation regulator EzrA (574 aa).

The Extracellular portion of the chain corresponds to 1 to 7; it reads MSSGIIL. A helical transmembrane segment spans residues 8–26; the sequence is LIVAIVLLVIIAYLVGVII. Topologically, residues 27–574 are cytoplasmic; sequence RKRNDTLITS…YEKTRERIRF (548 aa). 4 coiled-coil regions span residues 102 to 131, 161 to 190, 276 to 379, and 459 to 493; these read NFIR…REAL, ENED…FVAL, VTLD…QQEK, and QLEA…NLEE.

It belongs to the EzrA family.

The protein localises to the cell membrane. Its function is as follows. Negative regulator of FtsZ ring formation; modulates the frequency and position of FtsZ ring formation. Inhibits FtsZ ring formation at polar sites. Interacts either with FtsZ or with one of its binding partners to promote depolymerization. This is Septation ring formation regulator EzrA from Streptococcus equi subsp. zooepidemicus (strain H70).